The chain runs to 532 residues: Glucose-6-phosphate isomerase (532 aa).

The active-site Proton donor is the glutamate 322. Active-site residues include histidine 351 and lysine 457.

Belongs to the GPI family.

The protein localises to the cytoplasm. It catalyses the reaction alpha-D-glucose 6-phosphate = beta-D-fructose 6-phosphate. It functions in the pathway carbohydrate biosynthesis; gluconeogenesis. It participates in carbohydrate degradation; glycolysis; D-glyceraldehyde 3-phosphate and glycerone phosphate from D-glucose: step 2/4. Catalyzes the reversible isomerization of glucose-6-phosphate to fructose-6-phosphate. In Synechococcus sp. (strain JA-2-3B'a(2-13)) (Cyanobacteria bacterium Yellowstone B-Prime), this protein is Glucose-6-phosphate isomerase.